A 397-amino-acid polypeptide reads, in one-letter code: Acetate kinase (397 aa).

Asn-7 contributes to the Mg(2+) binding site. Lys-14 serves as a coordination point for ATP. Arg-91 provides a ligand contact to substrate. Asp-148 acts as the Proton donor/acceptor in catalysis. ATP contacts are provided by residues His-208–Gly-212, Asp-283–Arg-285, and Gly-331–Asn-335. A Mg(2+)-binding site is contributed by Glu-384.

This sequence belongs to the acetokinase family. Homodimer. Mg(2+) serves as cofactor. Mn(2+) is required as a cofactor.

It is found in the cytoplasm. The enzyme catalyses acetate + ATP = acetyl phosphate + ADP. The protein operates within metabolic intermediate biosynthesis; acetyl-CoA biosynthesis; acetyl-CoA from acetate: step 1/2. Functionally, catalyzes the formation of acetyl phosphate from acetate and ATP. Can also catalyze the reverse reaction. The sequence is that of Acetate kinase from Azobacteroides pseudotrichonymphae genomovar. CFP2.